The primary structure comprises 433 residues: Glutamate-1-semialdehyde 2,1-aminomutase (433 aa).

K269 is modified (N6-(pyridoxal phosphate)lysine).

It belongs to the class-III pyridoxal-phosphate-dependent aminotransferase family. HemL subfamily. As to quaternary structure, homodimer. It depends on pyridoxal 5'-phosphate as a cofactor.

The protein resides in the cytoplasm. It carries out the reaction (S)-4-amino-5-oxopentanoate = 5-aminolevulinate. It participates in porphyrin-containing compound metabolism; protoporphyrin-IX biosynthesis; 5-aminolevulinate from L-glutamyl-tRNA(Glu): step 2/2. This Renibacterium salmoninarum (strain ATCC 33209 / DSM 20767 / JCM 11484 / NBRC 15589 / NCIMB 2235) protein is Glutamate-1-semialdehyde 2,1-aminomutase.